A 397-amino-acid chain; its full sequence is Tryptophan synthase beta chain (397 aa).

N6-(pyridoxal phosphate)lysine is present on lysine 88.

The protein belongs to the TrpB family. Tetramer of two alpha and two beta chains. Pyridoxal 5'-phosphate serves as cofactor.

The enzyme catalyses (1S,2R)-1-C-(indol-3-yl)glycerol 3-phosphate + L-serine = D-glyceraldehyde 3-phosphate + L-tryptophan + H2O. It participates in amino-acid biosynthesis; L-tryptophan biosynthesis; L-tryptophan from chorismate: step 5/5. The beta subunit is responsible for the synthesis of L-tryptophan from indole and L-serine. This Shewanella amazonensis (strain ATCC BAA-1098 / SB2B) protein is Tryptophan synthase beta chain.